We begin with the raw amino-acid sequence, 195 residues long: Peroxiredoxin bcp1 (195 aa).

The region spanning 46 to 168 is the Thioredoxin domain; it reads IQVGDVIPDI…SHWIFEKGTG (123 aa). The active-site Cysteine sulfenic acid (-SOH) intermediate is cysteine 89. Cysteine 89 and cysteine 94 form a disulfide bridge.

Belongs to the peroxiredoxin family. BCP/PrxQ subfamily. As to quaternary structure, monomer. Post-translationally, the active site is a conserved redox-active cysteine residue, the peroxidatic cysteine (C(P)), which makes the nucleophilic attack on the peroxide substrate. The peroxide oxidizes the C(P)-SH to cysteine sulfenic acid (C(P)-SOH), which then reacts with another cysteine residue, the resolving cysteine (C(R)), to form a disulfide bridge. The disulfide is subsequently reduced by an appropriate electron donor to complete the catalytic cycle. In this atypical 2-Cys peroxiredoxin, C(R) is present in the same subunit to form an intramolecular disulfide. The disulfide is subsequently reduced by thioredoxin.

Its subcellular location is the cytoplasm. It is found in the nucleus. The catalysed reaction is a hydroperoxide + [thioredoxin]-dithiol = an alcohol + [thioredoxin]-disulfide + H2O. Its function is as follows. Thiol-specific peroxidase that catalyzes the reduction of hydrogen peroxide and organic hydroperoxides to water and alcohols, respectively. Plays a role in cell protection against oxidative stress by detoxifying peroxides and as sensor of hydrogen peroxide-mediated signaling events. Acts as a scavenger of H(2)O(2). The sequence is that of Peroxiredoxin bcp1 (bcp1) from Schizosaccharomyces pombe (strain 972 / ATCC 24843) (Fission yeast).